A 382-amino-acid chain; its full sequence is Protein NASP homolog 1 (382 aa).

Positions 1 to 39 (MDTENIADASDIRVKDASGDSDEKGNGTTTEEETVEQKE) are disordered. Residues 10–25 (SDIRVKDASGDSDEKG) are compositionally biased toward basic and acidic residues. Residues 42-75 (LAELLAAGRRALKVNDIDKASDSLSEATELSSEI) form a TPR 1 repeat. The span at 103 to 112 (QLLKGPGEKE) shows a compositional bias: basic and acidic residues. The disordered stretch occupies residues 103–151 (QLLKGPGEKESGDEEQAGNSDDKTDEENGETEKEDGEESGEEEDDDDDT). Residues 125–150 (KTDEENGETEKEDGEESGEEEDDDDD) show a composition bias toward acidic residues. 2 TPR repeats span residues 191-224 (ADVL…QRNV) and 233-266 (AQTY…LIAR). Positions 264-304 (IARQTELKHELERGVDDKEKKSEFENELKELEEMMPGVEEM) form a coiled coil. The disordered stretch occupies residues 337 to 382 (PQEAGDQKEANDISSLVRRPAKRAVDAPTDNQAVKKEKEEEGTTSI). Over residues 369-382 (AVKKEKEEEGTTSI) the composition is skewed to basic and acidic residues.

This sequence belongs to the NASP family. May interact with zinc finger protein tra-4 and histone deacetylase hda-1.

The protein resides in the nucleus. In terms of biological role, promotes normal hermaphrodite (XX) development, in concert with zinc finger protein tra-4 and histone deacetylase hda-1, perhaps as components of a complex. May act redundantly with nasp-2. Involved in innate immune response to B.thuringiensis strain DB27 and S.aureus bacteria. May play a role in the uptake or spreading of dsRNA. This is Protein NASP homolog 1 from Caenorhabditis elegans.